The chain runs to 110 residues: Nucleoid-associated protein Sfum_2790 (110 aa).

Belongs to the YbaB/EbfC family. In terms of assembly, homodimer.

It localises to the cytoplasm. It is found in the nucleoid. In terms of biological role, binds to DNA and alters its conformation. May be involved in regulation of gene expression, nucleoid organization and DNA protection. In Syntrophobacter fumaroxidans (strain DSM 10017 / MPOB), this protein is Nucleoid-associated protein Sfum_2790.